The primary structure comprises 1752 residues: Gag-Pol polyprotein (1752 aa).

Residue glycine 2 is the site of N-myristoyl glycine; by host attachment. Positions 154-185 form a coiled coil; it reads AAQQQVLLLQREQQREQREKDIKKRDEKKKKL. Basic and acidic residues predominate over residues 168–178; the sequence is REQREKDIKKR. A disordered region spans residues 168-222; the sequence is REQREKDIKKRDEKKKKLLPDTTQKVEQTDIGEASSSDASAQKPISTDNNPDLKV. Over residues 201–217 the composition is skewed to polar residues; the sequence is ASSSDASAQKPISTDNN. The segment at 501 to 518 adopts a CCHC-type zinc-finger fold; that stretch reads NTCFFCKQPGHWKADCPN. A Peptidase A2 domain is found at 618-694; that stretch reads IPMLVDTGAC…QTFHILGRDT (77 aa). Catalysis depends on aspartate 623, which acts as the Protease; shared with dimeric partner. The Reverse transcriptase domain occupies 793 to 977; that stretch reads ENQGILIKCH…QEVVYLGQLL (185 aa). Mg(2+) contacts are provided by aspartate 861, aspartate 928, aspartate 929, aspartate 1231, glutamate 1269, aspartate 1290, aspartate 1360, aspartate 1493, and aspartate 1550. The RNase H type-1 domain occupies 1222–1368; that stretch reads PDPDMTLFSD…ADEAAKNAVF (147 aa). The region spanning 1482 to 1638 is the Integrase catalytic domain; that stretch reads LPSRPFAHLQ…SPHEIVMGRP (157 aa).

Homohexamer. Further associates as homomultimer. The virus core is composed of a lattice formed from hexagonal rings, each containing six capsid monomers. The protease is a homodimer, whose active site consists of two apposed aspartic acid residues. The reverse transcriptase is a monomer. It depends on Mg(2+) as a cofactor. Specific enzymatic cleavages by the viral protease yield mature proteins. The protease is released by autocatalytic cleavage. The polyprotein is cleaved during and after budding, this process is termed maturation.

It localises to the host cell membrane. The protein resides in the virion. The enzyme catalyses DNA(n) + a 2'-deoxyribonucleoside 5'-triphosphate = DNA(n+1) + diphosphate. It carries out the reaction Endonucleolytic cleavage to 5'-phosphomonoester.. In terms of biological role, targets Gag and gag-pol polyproteins to the plasma membrane via a multipartite membrane binding signal, that includes its myristoylated N-terminus. Also mediates nuclear localization of the pre-integration complex. Functionally, capsid protein p25 forms the spherical core of the virion that encapsulates the genomic RNA-nucleocapsid complex. Involved in the packaging and encapsidation of two copies of the genome. Binds with high affinity to conserved UCUG elements within the packaging signal, located near the 5'-end of the genome. This binding is dependent on genome dimerization. Its function is as follows. Mediates proteolytic cleavages of Gag and Gag-Pol polyproteins during or shortly after the release of the virion from the plasma membrane. Cleavages take place as an ordered, step-wise cascade to yield mature proteins. This process is called maturation. Displays maximal activity during the budding process just prior to particle release from the cell. In terms of biological role, is a multifunctional enzyme that converts the viral dimeric RNA genome into dsDNA in the cytoplasm, shortly after virus entry into the cell. This enzyme displays a DNA polymerase activity that can copy either DNA or RNA templates, and a ribonuclease H (RNase H) activity that cleaves the RNA strand of RNA-DNA heteroduplexes in a partially processive 3' to 5' endonucleasic mode. Conversion of viral genomic RNA into dsDNA requires many steps. A tRNA binds to the primer-binding site (PBS) situated at the 5' end of the viral RNA. RT uses the 3' end of the tRNA primer to perform a short round of RNA-dependent minus-strand DNA synthesis. The reading proceeds through the U5 region and ends after the repeated (R) region which is present at both ends of viral RNA. The portion of the RNA-DNA heteroduplex is digested by the RNase H, resulting in a ssDNA product attached to the tRNA primer. This ssDNA/tRNA hybridizes with the identical R region situated at the 3' end of viral RNA. This template exchange, known as minus-strand DNA strong stop transfer, can be either intra- or intermolecular. RT uses the 3' end of this newly synthesized short ssDNA to perform the RNA-dependent minus-strand DNA synthesis of the whole template. RNase H digests the RNA template except for a polypurine tract (PPT) situated at the 5' end of the genome. It is not clear if both polymerase and RNase H activities are simultaneous. RNase H probably can proceed both in a polymerase-dependent (RNA cut into small fragments by the same RT performing DNA synthesis) and a polymerase-independent mode (cleavage of remaining RNA fragments by free RTs). Secondly, RT performs DNA-directed plus-strand DNA synthesis using the PPT that has not been removed by RNase H as primers. PPT and tRNA primers are then removed by RNase H. The 3' and 5' ssDNA PBS regions hybridize to form a circular dsDNA intermediate. Strand displacement synthesis by RT to the PBS and PPT ends produces a blunt ended, linear dsDNA copy of the viral genome that includes long terminal repeats (LTRs) at both ends. Functionally, catalyzes viral DNA integration into the host chromosome, by performing a series of DNA cutting and joining reactions. This enzyme activity takes place after virion entry into a cell and reverse transcription of the RNA genome in dsDNA. The first step in the integration process is 3' processing. This step requires a complex comprising the viral genome, matrix protein and integrase. This complex is called the pre-integration complex (PIC). The integrase protein removes 2 nucleotides from each 3' end of the viral DNA, leaving recessed CA OH's at the 3' ends. In the second step that requires cell division, the PIC enters cell nucleus. In the third step, termed strand transfer, the integrase protein joins the previously processed 3' ends to the 5' ends of strands of target cellular DNA at the site of integration. The last step is viral DNA integration into host chromosome. Plays a role in budding and is processed by the viral protease during virion maturation outside the cell. This chain is Gag-Pol polyprotein (gag-pol), found in Walleye dermal sarcoma virus (WDSV).